Here is a 309-residue protein sequence, read N- to C-terminus: Methionyl-tRNA formyltransferase (309 aa).

109 to 112 (SLLP) contacts (6S)-5,6,7,8-tetrahydrofolate.

It belongs to the Fmt family.

The catalysed reaction is L-methionyl-tRNA(fMet) + (6R)-10-formyltetrahydrofolate = N-formyl-L-methionyl-tRNA(fMet) + (6S)-5,6,7,8-tetrahydrofolate + H(+). Attaches a formyl group to the free amino group of methionyl-tRNA(fMet). The formyl group appears to play a dual role in the initiator identity of N-formylmethionyl-tRNA by promoting its recognition by IF2 and preventing the misappropriation of this tRNA by the elongation apparatus. This chain is Methionyl-tRNA formyltransferase, found in Chloroflexus aggregans (strain MD-66 / DSM 9485).